The primary structure comprises 401 residues: uncharacterized protein (401 aa).

It belongs to the serpin family.

In terms of biological role, may act as an inhibitor for a host chymotrypsin-like protease. This is an uncharacterized protein from Acanthamoeba polyphaga mimivirus (APMV).